We begin with the raw amino-acid sequence, 70 residues long: Small ribosomal subunit protein bS21 (70 aa).

Belongs to the bacterial ribosomal protein bS21 family.

The polypeptide is Small ribosomal subunit protein bS21 (Campylobacter jejuni subsp. jejuni serotype O:23/36 (strain 81-176)).